We begin with the raw amino-acid sequence, 101 residues long: Small ribosomal subunit protein uS14 (101 aa).

Belongs to the universal ribosomal protein uS14 family. As to quaternary structure, part of the 30S ribosomal subunit. Contacts proteins S3 and S10.

Binds 16S rRNA, required for the assembly of 30S particles and may also be responsible for determining the conformation of the 16S rRNA at the A site. This chain is Small ribosomal subunit protein uS14, found in Polaromonas naphthalenivorans (strain CJ2).